The following is a 440-amino-acid chain: MQVKIEEISSVKRRISVEVPAERVNTEIEKSFAGIQKKATLAGFRKGKAPLQMVKKFYRNAMQDEVMRRLYEQTLFPALDEHKLEPVDAPMIDDIALVEEGTPFKYSALIEIMPQILLGEYKGLQVKKERYVADEKAVEGEIERMRENMAQLAPVEEGTVEKGMVLTVDFSFAVPGYPEEETSGKDASVEVGNGRLLPGLEEGLIGMALGETKDITVTMPDDNPNKELAGKPGVFTVTLKEIKKKELPELNDEFAQQFGDFETIADMRTKLTEMREQQELERIKTDLKTRIIDALIEKNPLEVPDSMVRRQTDFMLENLKNRLKGQNMSLEMMGLDEDGYRQRFWGEAAQKVKGGLLVMALVEQENIAVEEADLEARYAQIAAGNEDMLSRIKEFYAAQANARNSMVAEIKEDKAIAFLLENAVVTEVEAAELNAPVAGE.

A PPIase FKBP-type domain is found at 163–248 (GMVLTVDFSF…LKEIKKKELP (86 aa)).

The protein belongs to the FKBP-type PPIase family. Tig subfamily.

It is found in the cytoplasm. It catalyses the reaction [protein]-peptidylproline (omega=180) = [protein]-peptidylproline (omega=0). In terms of biological role, involved in protein export. Acts as a chaperone by maintaining the newly synthesized protein in an open conformation. Functions as a peptidyl-prolyl cis-trans isomerase. The sequence is that of Trigger factor from Trichlorobacter lovleyi (strain ATCC BAA-1151 / DSM 17278 / SZ) (Geobacter lovleyi).